We begin with the raw amino-acid sequence, 85 residues long: U4-theraphotoxin-Hhn1t (85 aa).

A signal peptide spans M1–A22. Positions E23–R48 are excised as a propeptide. 3 disulfides stabilise this stretch: C52-C66, C56-C77, and C71-C82.

This sequence belongs to the neurotoxin 12 (Hwtx-2) family. 02 (Hwtx-2) subfamily. As to expression, expressed by the venom gland.

Its subcellular location is the secreted. Its function is as follows. Postsynaptic neurotoxin. This is U4-theraphotoxin-Hhn1t from Cyriopagopus hainanus (Chinese bird spider).